Here is a 308-residue protein sequence, read N- to C-terminus: Oxygen-dependent coproporphyrinogen-III oxidase (308 aa).

Position 100 (Ser-100) interacts with substrate. The a divalent metal cation site is built by His-104 and His-114. The active-site Proton donor is His-114. Position 116–118 (116–118) interacts with substrate; the sequence is NFR. The a divalent metal cation site is built by His-153 and His-183. Positions 248–283 are important for dimerization; that stretch reads YVEFNLVFDRGTIFGLQSGGRTESILSSMPPIATWK. A substrate-binding site is contributed by 266 to 268; the sequence is GGR.

This sequence belongs to the aerobic coproporphyrinogen-III oxidase family. In terms of assembly, homodimer. It depends on a divalent metal cation as a cofactor.

It localises to the cytoplasm. It carries out the reaction coproporphyrinogen III + O2 + 2 H(+) = protoporphyrinogen IX + 2 CO2 + 2 H2O. It participates in porphyrin-containing compound metabolism; protoporphyrin-IX biosynthesis; protoporphyrinogen-IX from coproporphyrinogen-III (O2 route): step 1/1. Involved in the heme biosynthesis. Catalyzes the aerobic oxidative decarboxylation of propionate groups of rings A and B of coproporphyrinogen-III to yield the vinyl groups in protoporphyrinogen-IX. This chain is Oxygen-dependent coproporphyrinogen-III oxidase, found in Francisella tularensis subsp. tularensis (strain FSC 198).